Here is a 256-residue protein sequence, read N- to C-terminus: Histone H1 (256 aa).

2 stretches are compositionally biased toward low complexity: residues 1 to 19 (MSDSAVATSASPVAAPPAT) and 27 to 43 (KKASGSAGTKAKKASAT). 2 disordered regions span residues 1 to 53 (MSDS…QQMV) and 108 to 256 (GKGA…AAKK). Ser11 carries the post-translational modification Phosphoserine. One can recognise an H15 domain in the interval 45–119 (SHPPTQQMVD…GASGSFKLSA (75 aa)). Composition is skewed to basic and acidic residues over residues 121–140 (AKKEKDPKAKSKVLSAEKKV) and 176–193 (KTAENKKTEKAKAKDAKK). The span at 194 to 229 (TGIIKSKPAATKAKVTAAKPKAVVAKASKAKPAVSA) shows a compositional bias: low complexity. Over residues 245–256 (KKPKAKTTAAKK) the composition is skewed to basic residues.

Belongs to the histone H1/H5 family. Phosphorylated in oocytes during prophase I of meiosis.

The protein resides in the nucleus. It localises to the chromosome. Histones H1 are necessary for the condensation of nucleosome chains into higher-order structures. The polypeptide is Histone H1 (His1) (Drosophila melanogaster (Fruit fly)).